A 558-amino-acid polypeptide reads, in one-letter code: 2-isopropylmalate synthase (558 aa).

One can recognise a Pyruvate carboxyltransferase domain in the interval 31 to 305 (PRWCSTDLRD…YPNLDFSDMR (275 aa)). D40, H244, H246, and N280 together coordinate Mg(2+). The segment at 439-558 (NPDDKGQMKL…NACHPLYKEA (120 aa)) is regulatory domain.

It belongs to the alpha-IPM synthase/homocitrate synthase family. LeuA type 2 subfamily. As to quaternary structure, homodimer. Mg(2+) serves as cofactor.

It is found in the cytoplasm. It carries out the reaction 3-methyl-2-oxobutanoate + acetyl-CoA + H2O = (2S)-2-isopropylmalate + CoA + H(+). It participates in amino-acid biosynthesis; L-leucine biosynthesis; L-leucine from 3-methyl-2-oxobutanoate: step 1/4. Catalyzes the condensation of the acetyl group of acetyl-CoA with 3-methyl-2-oxobutanoate (2-ketoisovalerate) to form 3-carboxy-3-hydroxy-4-methylpentanoate (2-isopropylmalate). The polypeptide is 2-isopropylmalate synthase (Marinomonas sp. (strain MWYL1)).